The sequence spans 88 residues: Small ribosomal subunit protein uS19 (88 aa).

The protein belongs to the universal ribosomal protein uS19 family.

In terms of biological role, protein S19 forms a complex with S13 that binds strongly to the 16S ribosomal RNA. The protein is Small ribosomal subunit protein uS19 (rpsS) of Chlamydia pneumoniae (Chlamydophila pneumoniae).